A 237-amino-acid polypeptide reads, in one-letter code: Tetraspanin-8 (237 aa).

At 1–9 the chain is on the cytoplasmic side; that stretch reads MAGVSACIK. A helical transmembrane segment spans residues 10-33; it reads YSMFTFNFLFWLCGILILALAIWV. Topologically, residues 34 to 57 are extracellular; sequence RVSNDSQAIFGSEDVGSSSYVAVD. Residues 58-72 form a helical membrane-spanning segment; sequence ILIAVGAIIMILGFL. At 73–83 the chain is on the cytoplasmic side; it reads GCCGAIKESRC. The helical transmembrane segment at 84–109 threads the bilayer; it reads MLLLFFIGLLLILLLQVATGILGAVF. The Extracellular segment spans residues 110 to 205; it reads KSKSDRIVNE…SFIKDFLAKN (96 aa). An N-linked (GlcNAc...) asparagine glycan is attached at Asn-118. A helical transmembrane segment spans residues 206-230; sequence LIIVIGISFGLAVIEILGLVFSMVL. The Cytoplasmic portion of the chain corresponds to 231-237; that stretch reads YCQIGNK.

It belongs to the tetraspanin (TM4SF) family. In terms of assembly, forms homooligomers. Interacts with MEP1B. Interacts with integrin alpha3/ITGA3. Interacts with RICTOR and MTOR. Interacts with ADAM17. Interacts with ECE1. In terms of tissue distribution, gastric, colon, rectal, and pancreatic carcinomas.

It is found in the cell membrane. Functionally, structural component of specialized membrane microdomains known as tetraspanin-enriched microdomains (TERMs), which act as platforms for receptor clustering and signaling. Participates thereby in diverse biological functions such as cell signal transduction, migration and protein trafficking. Promotes ADAM17-mediated TNF-alpha processing through recruitment of ADAM17 to tetraspanin-enriched micro-domains (TEMs). Forms a complex with RICTOR and integrin alpha3/ITGA3 to mediate mTORC2 activation and AKT1 phosphorylation leading to cell migration. Reduces apoptosis and autophagy induced by high glucose levels through forming a complex with mTOR and RICTOR. Contributes to the maintenance of intestinal epithelial barrier and plays a role in the regulation of intestine inflammation by switching interferon gamma receptor 1/IFNGR1 from clathrin-dependent to lipid raft-dependent endocytosis route to limit STAT1 activation magnitude and duration. Acts as a modulator of the endothelin axis by associating with endothelin converting enzyme ECE1 and regulating its activity of conversion of the endothelin-1 precursor to endothelin. The sequence is that of Tetraspanin-8 (TSPAN8) from Homo sapiens (Human).